The sequence spans 330 residues: MSTASAFATNVPSFVNASSLKKSSTSSARSGVLSAKFTCNSSSSSSSATPPSLIRNEPVFAAPAPIITPNWTEDGNESYEEAIDALKKMLIEKGELEPVAAARIDQITAQAAAPDTKAPFDPVERIKSGFVKFKTEKFVTNPALYDELAKGQSPKFMVFACSDSRVCPSHVLDFQPGEAFVVRNVANMVPPFDKTKYSGVGAAVEYAVLHLKVQEIFVIGHSRCGGIKGLMTFPDEGPHSTDFIEDWVKVCLPAKSKVVAEHNGTHLDDQCVLCEKEAVNVSLGNLLTYPFVRDGLRNNTLALKGGHYDFVNGTFELWALDFGLSSPTSV.

The tract at residues 1-109 (MSTASAFATN…AAARIDQITA (109 aa)) is chloroplast transit peptide-like.

This sequence belongs to the beta-class carbonic anhydrase family.

Its subcellular location is the cytoplasm. The catalysed reaction is hydrogencarbonate + H(+) = CO2 + H2O. In terms of biological role, reversible hydration of carbon dioxide. This Flaveria brownii (Brown's yellowtops) protein is Carbonic anhydrase.